We begin with the raw amino-acid sequence, 229 residues long: MSRVLSRDQSREVDQIAIEQFHLPGVVLMENAGRNCAELIRQLSPAGQILILAGKGNNGGDGFVIARHLHNAGLNVKLLVFANPEDYSGEAESNWRIITAMQLPAVSNATAADLSQALAELPESSLIVDALLGTGIRGQVRAPFDEIITAVNAYRDDHPHAIVFAVDVPSGLDCDTGLPCGVAIKADQTATFVMLKQGFVTGDGPEYTGTTHVIDIGIPPALLDRLTAE.

Positions 10 to 224 constitute a YjeF N-terminal domain; that stretch reads SREVDQIAIE…DIGIPPALLD (215 aa). Position 57–61 (57–61) interacts with (6S)-NADPHX; it reads NNGGD. The K(+) site is built by Asn58 and Asp129. Residues 133–139 and Asp167 contribute to the (6S)-NADPHX site; that span reads GTGIRGQ. Ser170 contacts K(+).

Belongs to the NnrE/AIBP family. K(+) serves as cofactor.

The enzyme catalyses (6R)-NADHX = (6S)-NADHX. The catalysed reaction is (6R)-NADPHX = (6S)-NADPHX. Functionally, catalyzes the epimerization of the S- and R-forms of NAD(P)HX, a damaged form of NAD(P)H that is a result of enzymatic or heat-dependent hydration. This is a prerequisite for the S-specific NAD(P)H-hydrate dehydratase to allow the repair of both epimers of NAD(P)HX. This chain is NAD(P)H-hydrate epimerase, found in Rubinisphaera brasiliensis (strain ATCC 49424 / DSM 5305 / JCM 21570 / IAM 15109 / NBRC 103401 / IFAM 1448) (Planctomyces brasiliensis).